The sequence spans 349 residues: Isopentenyl-diphosphate delta-isomerase (349 aa).

6–7 (RK) serves as a coordination point for substrate. FMN contacts are provided by residues 62-64 (AMT), Ser93, and Asn122. Substrate is bound at residue Gln152. Glu153 is a binding site for Mg(2+). Residues Lys184, Thr214, 258 to 259 (GG), and 280 to 281 (AG) each bind FMN.

The protein belongs to the IPP isomerase type 2 family. As to quaternary structure, homooctamer. Dimer of tetramers. FMN serves as cofactor. NADPH is required as a cofactor. It depends on Mg(2+) as a cofactor.

The protein resides in the cytoplasm. It catalyses the reaction isopentenyl diphosphate = dimethylallyl diphosphate. Involved in the biosynthesis of isoprenoids. Catalyzes the 1,3-allylic rearrangement of the homoallylic substrate isopentenyl (IPP) to its allylic isomer, dimethylallyl diphosphate (DMAPP). The sequence is that of Isopentenyl-diphosphate delta-isomerase from Bacillus licheniformis (strain ATCC 14580 / DSM 13 / JCM 2505 / CCUG 7422 / NBRC 12200 / NCIMB 9375 / NCTC 10341 / NRRL NRS-1264 / Gibson 46).